A 271-amino-acid chain; its full sequence is 2,3,4,5-tetrahydropyridine-2,6-dicarboxylate N-succinyltransferase (271 aa).

This sequence belongs to the transferase hexapeptide repeat family.

The protein resides in the cytoplasm. The enzyme catalyses (S)-2,3,4,5-tetrahydrodipicolinate + succinyl-CoA + H2O = (S)-2-succinylamino-6-oxoheptanedioate + CoA. The protein operates within amino-acid biosynthesis; L-lysine biosynthesis via DAP pathway; LL-2,6-diaminopimelate from (S)-tetrahydrodipicolinate (succinylase route): step 1/3. The sequence is that of 2,3,4,5-tetrahydropyridine-2,6-dicarboxylate N-succinyltransferase from Coxiella burnetii (strain CbuG_Q212) (Coxiella burnetii (strain Q212)).